The sequence spans 495 residues: NADH-ubiquinone oxidoreductase chain 4 (495 aa).

The next 15 membrane-spanning stretches (helical) occupy residues 9–29 (YFDLSGLILCPVLGSIILLFI), 39–59 (LIGLCVSLITFLYSLVLWIQF), 89–109 (LSLFFVILTTFLIPICILVGW), 118–138 (EYIIAFLICEFLMIAVFCMLD), 139–159 (LLLFYVFFESVLIPMFIIIGV), 173–193 (FFLYTLLGSVFMLLAILLILL), 214–234 (ILLWIAFFASFAVKVPMVPVH), 245–265 (PTAGSVILAGILLKLGTYGFL), 272–292 (FPEATLCFTPFIYTLSAIAII), 313–333 (VAHMNLVTIGMFSLNIQGIGG), 335–355 (ILLMLSHGLVSSALFLCVGVL), 367–387 (YGGLVSTMPNFSTIFFFFTLA), 388–408 (NMSLPGTSSFIGEFLILVGAF), 413–433 (LVATLRALGMILGAAYSLWLY), and 457–477 (VFIFLPFLVGVVWMGVYPKVF).

The protein belongs to the complex I subunit 4 family.

The protein resides in the mitochondrion membrane. The enzyme catalyses a ubiquinone + NADH + 5 H(+)(in) = a ubiquinol + NAD(+) + 4 H(+)(out). Its function is as follows. Core subunit of the mitochondrial membrane respiratory chain NADH dehydrogenase (Complex I) that is believed to belong to the minimal assembly required for catalysis. Complex I functions in the transfer of electrons from NADH to the respiratory chain. The immediate electron acceptor for the enzyme is believed to be ubiquinone. This chain is NADH-ubiquinone oxidoreductase chain 4 (ND4), found in Triticum aestivum (Wheat).